A 214-amino-acid polypeptide reads, in one-letter code: Probable transaldolase (214 aa).

Catalysis depends on Lys83, which acts as the Schiff-base intermediate with substrate.

It belongs to the transaldolase family. Type 3B subfamily.

It localises to the cytoplasm. The enzyme catalyses D-sedoheptulose 7-phosphate + D-glyceraldehyde 3-phosphate = D-erythrose 4-phosphate + beta-D-fructose 6-phosphate. It functions in the pathway carbohydrate degradation; pentose phosphate pathway; D-glyceraldehyde 3-phosphate and beta-D-fructose 6-phosphate from D-ribose 5-phosphate and D-xylulose 5-phosphate (non-oxidative stage): step 2/3. Functionally, transaldolase is important for the balance of metabolites in the pentose-phosphate pathway. The protein is Probable transaldolase of Leptospira interrogans serogroup Icterohaemorrhagiae serovar copenhageni (strain Fiocruz L1-130).